A 238-amino-acid chain; its full sequence is Succinate dehydrogenase iron-sulfur subunit (238 aa).

The 2Fe-2S ferredoxin-type domain maps to 8 to 97; sequence YRYNPDVDDA…KIVIRPLPGL (90 aa). Residues Cys55, Cys60, and Cys75 each contribute to the [2Fe-2S] cluster site. One can recognise a 4Fe-4S ferredoxin-type domain in the interval 139 to 169; it reads QREKLDGLYECILCACCSTSCPSFWWNPDKF. The [4Fe-4S] cluster site is built by Cys149, Cys152, and Cys155. Cys159 provides a ligand contact to [3Fe-4S] cluster. Trp164 contacts a ubiquinone. Residues Cys206 and Cys212 each coordinate [3Fe-4S] cluster. Cys216 is a binding site for [4Fe-4S] cluster.

The protein belongs to the succinate dehydrogenase/fumarate reductase iron-sulfur protein family. Part of an enzyme complex containing four subunits: a flavoprotein, an iron-sulfur, cytochrome b-556, and a hydrophobic anchor protein. The complex forms trimers. [2Fe-2S] cluster serves as cofactor. Requires [3Fe-4S] cluster as cofactor. The cofactor is [4Fe-4S] cluster.

It localises to the cell inner membrane. The enzyme catalyses a quinone + succinate = fumarate + a quinol. Its pathway is carbohydrate metabolism; tricarboxylic acid cycle; fumarate from succinate (bacterial route): step 1/1. In terms of biological role, two distinct, membrane-bound, FAD-containing enzymes are responsible for the catalysis of fumarate and succinate interconversion; the fumarate reductase is used in anaerobic growth, and the succinate dehydrogenase is used in aerobic growth. This Escherichia coli (strain K12) protein is Succinate dehydrogenase iron-sulfur subunit (sdhB).